The following is a 238-amino-acid chain: MKVSLFVTCLVDMFQTNVGKATVEVLERLGCEVDFPEGQICCGQPAYNSGYVTDAKKAMKRMIAAFEEAEYVVSPSGSCTTMFREYPHLFQDDPKWAAKAQQLADKTYELTDFIVNVLGVEDVGAVLHKKATVHTSCHMTRLLGVSEEPMKLLRHVKGLELTALPGKHQCCGFGGTFSVKMAQISEQMVDEKVACVEDTEAEVLIGADCGCLMNIGGRLDRKDKNVRVMHIAEVLNSR.

Belongs to the LutA/YkgE family.

Functionally, is involved in L-lactate degradation and allows cells to grow with lactate as the sole carbon source. The polypeptide is Lactate utilization protein A (Bacillus velezensis (strain DSM 23117 / BGSC 10A6 / LMG 26770 / FZB42) (Bacillus amyloliquefaciens subsp. plantarum)).